Reading from the N-terminus, the 274-residue chain is Undecaprenyl-diphosphatase (274 aa).

Helical transmembrane passes span 44-64, 85-105, 109-129, 185-205, 215-235, and 250-270; these read AKVFDIAIQTGAIFAVILVYW, LNVLIGFLPAVLLGLLLGKAI, LFTPVVVASTFILGGFVILWA, ATDYSFFLAIPTLIGAGVYSL, ADIPLFAVGLVFSFISAWLCV, and FAWYRIAFGLVVLVTAWSGLV.

It belongs to the UppP family.

Its subcellular location is the cell inner membrane. It carries out the reaction di-trans,octa-cis-undecaprenyl diphosphate + H2O = di-trans,octa-cis-undecaprenyl phosphate + phosphate + H(+). Its function is as follows. Catalyzes the dephosphorylation of undecaprenyl diphosphate (UPP). Confers resistance to bacitracin. This Acidovorax ebreus (strain TPSY) (Diaphorobacter sp. (strain TPSY)) protein is Undecaprenyl-diphosphatase.